A 433-amino-acid polypeptide reads, in one-letter code: tRNA-2-methylthio-N(6)-dimethylallyladenosine synthase (433 aa).

The region spanning 4 to 119 (KKLFIQTLGC…ITQAIKTPKF (116 aa)) is the MTTase N-terminal domain. Cys13, Cys50, Cys82, Cys151, Cys155, and Cys158 together coordinate [4Fe-4S] cluster. Residues 137–370 (RNSIYKSYIN…QNRHSEILDE (234 aa)) enclose the Radical SAM core domain. The 61-residue stretch at 373–433 (KKQENKTFKV…KRMVLYGEIV (61 aa)) folds into the TRAM domain.

The protein belongs to the methylthiotransferase family. MiaB subfamily. As to quaternary structure, monomer. [4Fe-4S] cluster is required as a cofactor.

The protein resides in the cytoplasm. It carries out the reaction N(6)-dimethylallyladenosine(37) in tRNA + (sulfur carrier)-SH + AH2 + 2 S-adenosyl-L-methionine = 2-methylsulfanyl-N(6)-dimethylallyladenosine(37) in tRNA + (sulfur carrier)-H + 5'-deoxyadenosine + L-methionine + A + S-adenosyl-L-homocysteine + 2 H(+). Functionally, catalyzes the methylthiolation of N6-(dimethylallyl)adenosine (i(6)A), leading to the formation of 2-methylthio-N6-(dimethylallyl)adenosine (ms(2)i(6)A) at position 37 in tRNAs that read codons beginning with uridine. This Campylobacter jejuni (strain RM1221) protein is tRNA-2-methylthio-N(6)-dimethylallyladenosine synthase.